Consider the following 1178-residue polypeptide: Leucine--tRNA ligase, cytoplasmic (1178 aa).

Tyr54 and Tyr56 together coordinate L-leucine. A 'HIGH' region motif is present at residues 62–65; that stretch reads HLGH. Ser169 carries the post-translational modification Phosphoserine. The editing domain stretch occupies residues 262–511; it reads GPQEYTLVKL…DAGDALIYME (250 aa). L-leucine contacts are provided by Leu596 and Ser599. The 'KMSKS' region signature appears at 718–722; that stretch reads KMSKS. Lys721 is a binding site for ATP. The residue at position 722 (Ser722) is a Phosphoserine. N6-acetyllysine occurs at positions 972 and 1049.

This sequence belongs to the class-I aminoacyl-tRNA synthetase family.

It localises to the cytoplasm. The catalysed reaction is tRNA(Leu) + L-leucine + ATP = L-leucyl-tRNA(Leu) + AMP + diphosphate. It carries out the reaction L-methionyl-tRNA(Leu) + H2O = tRNA(Leu) + L-methionine + H(+). With respect to regulation, 5-fluoro-1,3-dihydro-1-hydroxy-1,2-benzoxaborole inhibits LARS1 by forming a covalent adduct with the 3' adenosine of tRNA(Leu) at the editing site, thus locking the enzyme in an inactive conformation. Its function is as follows. Aminoacyl-tRNA synthetase that catalyzes the specific attachment of leucine to its cognate tRNA (tRNA(Leu)). It performs tRNA aminoacylation in a two-step reaction: Leu is initially activated by ATP to form a leucyl-adenylate (Leu-AMP) intermediate; then the leucyl moiety is transferred to the acceptor 3' end of the tRNA to yield leucyl-tRNA. To improve the fidelity of catalytic reactions, it is also able to hydrolyze misactivated aminoacyl-adenylate intermediates (pre-transfer editing) and mischarged aminoacyl-tRNAs (post-transfer editing). This Mus musculus (Mouse) protein is Leucine--tRNA ligase, cytoplasmic (Lars1).